The sequence spans 116 residues: NADH-ubiquinone oxidoreductase chain 3 (116 aa).

A run of 3 helical transmembrane segments spans residues 8–28 (VAAT…LPSL), 56–76 (FFLV…LLPL), and 87–107 (ISLL…IYEW).

It belongs to the complex I subunit 3 family.

It localises to the mitochondrion membrane. It catalyses the reaction a ubiquinone + NADH + 5 H(+)(in) = a ubiquinol + NAD(+) + 4 H(+)(out). Functionally, core subunit of the mitochondrial membrane respiratory chain NADH dehydrogenase (Complex I) that is believed to belong to the minimal assembly required for catalysis. Complex I functions in the transfer of electrons from NADH to the respiratory chain. The immediate electron acceptor for the enzyme is believed to be ubiquinone. The polypeptide is NADH-ubiquinone oxidoreductase chain 3 (MT-ND3) (Squalus acanthias (Spiny dogfish)).